The sequence spans 1235 residues: Bromodomain-containing protein 8 (1235 aa).

Lys85 carries the N6-acetyllysine modification. A coiled-coil region spans residues Val97–Gln171. Phosphothreonine is present on Arg124. Leu128 and Asp144 each carry phosphoserine. Residues Arg186–Pro205 are disordered. Residue Ala264 is modified to Phosphothreonine. Residues Ser268, Ser284, Ser383, and Ser387 each carry the phosphoserine modification. Lys469 is covalently cross-linked (Glycyl lysine isopeptide (Lys-Gly) (interchain with G-Cter in SUMO2)). The residue at position 481 (Lys481) is an N6-acetyllysine; alternate. Lys481 is covalently cross-linked (Glycyl lysine isopeptide (Lys-Gly) (interchain with G-Cter in SUMO1); alternate). Lys481 is covalently cross-linked (Glycyl lysine isopeptide (Lys-Gly) (interchain with G-Cter in SUMO2); alternate). Residues Lys509 and Lys575 each participate in a glycyl lysine isopeptide (Lys-Gly) (interchain with G-Cter in SUMO2) cross-link. A disordered region spans residues Thr551–Leu597. Ser579 is subject to Phosphoserine. Residue Lys612 forms a Glycyl lysine isopeptide (Lys-Gly) (interchain with G-Cter in SUMO2) linkage. A phosphoserine mark is found at Ser621, Ser637, and Ser641. Residues Ser621–Ser672 are disordered. A Bromo 1 domain is found at Ile706–Phe811. Disordered regions lie at residues Ala827–Pro848, Glu903–Lys940, and Glu966–Glu999. Residues Arg831–Ser846 are compositionally biased toward basic and acidic residues. The segment covering Glu905 to Ser915 has biased composition (acidic residues). Phosphoserine is present on Leu924. A compositionally biased stretch (basic and acidic residues) spans Gln979 to Glu999. The Bromo 2 domain occupies Asp1099–Leu1207.

Component of the NuA4 histone acetyltransferase complex which contains the catalytic subunit KAT5/TIP60 and the subunits EP400, TRRAP/PAF400, BRD8/SMAP, EPC1, DMAP1/DNMAP1, RUVBL1/TIP49, RUVBL2, ING3, actin, ACTL6A/BAF53A, MORF4L1/MRG15, MORF4L2/MRGX, MRGBP, YEATS4/GAS41, VPS72/YL1 and MEAF6. The NuA4 complex interacts with MYC and the adenovirus E1A protein. Component of a NuA4-related complex which contains EP400, TRRAP/PAF400, SRCAP, BRD8/SMAP, EPC1, DMAP1/DNMAP1, RUVBL1/TIP49, RUVBL2, actin, ACTL6A/BAF53A, VPS72 and YEATS4/GAS41. BRD8 isoform 2 interacts with RXRA/NR2B1 and THRB/ERBA2. Component of a SWR1-like complex. In terms of tissue distribution, expressed in adipose tissue, brain, heart, kidney, liver, lung, pancreas, placenta and skeletal muscle.

The protein resides in the nucleus. In terms of biological role, may act as a coactivator during transcriptional activation by hormone-activated nuclear receptors (NR). Isoform 2 stimulates transcriptional activation by AR/DHTR, ESR1/NR3A1, RXRA/NR2B1 and THRB/ERBA2. At least isoform 1 and isoform 2 are components of the NuA4 histone acetyltransferase (HAT) complex which is involved in transcriptional activation of select genes principally by acetylation of nucleosomal histones H4 and H2A. This modification may both alter nucleosome - DNA interactions and promote interaction of the modified histones with other proteins which positively regulate transcription. This complex may be required for the activation of transcriptional programs associated with oncogene and proto-oncogene mediated growth induction, tumor suppressor mediated growth arrest and replicative senescence, apoptosis, and DNA repair. NuA4 may also play a direct role in DNA repair when recruited to sites of DNA damage. Component of a SWR1-like complex that specifically mediates the removal of histone H2A.Z/H2AZ1 from the nucleosome. This is Bromodomain-containing protein 8 (BRD8) from Homo sapiens (Human).